The primary structure comprises 433 residues: tRNA modification GTPase MnmE (433 aa).

Arg24, Glu81, and Arg120 together coordinate (6S)-5-formyl-5,6,7,8-tetrahydrofolate. The region spanning 216-359 is the TrmE-type G domain; the sequence is GVEIVVLGAP…LLAALRARVE (144 aa). Position 226 (Asn226) interacts with K(+). Residues 226–231, 245–251, 270–273, and 340–342 each bind GTP; these read NAGKST, SDIPGTT, DTAG, and SAR. Mg(2+) is bound at residue Ser230. Residues Ser245, Ile247, and Thr250 each coordinate K(+). Residue Thr251 coordinates Mg(2+). Residue Lys433 participates in (6S)-5-formyl-5,6,7,8-tetrahydrofolate binding.

This sequence belongs to the TRAFAC class TrmE-Era-EngA-EngB-Septin-like GTPase superfamily. TrmE GTPase family. In terms of assembly, homodimer. Heterotetramer of two MnmE and two MnmG subunits. Requires K(+) as cofactor.

The protein resides in the cytoplasm. Its function is as follows. Exhibits a very high intrinsic GTPase hydrolysis rate. Involved in the addition of a carboxymethylaminomethyl (cmnm) group at the wobble position (U34) of certain tRNAs, forming tRNA-cmnm(5)s(2)U34. This Acidiphilium cryptum (strain JF-5) protein is tRNA modification GTPase MnmE.